The following is a 554-amino-acid chain: Phenylalanine--tRNA ligase beta subunit (554 aa).

The 76-residue stretch at 276 to 351 (LTPKSRIISV…INYGYEKFDG (76 aa)) folds into the B5 domain. Mg(2+) is bound by residues D329, D335, E338, and E339.

It belongs to the phenylalanyl-tRNA synthetase beta subunit family. Type 2 subfamily. Tetramer of two alpha and two beta subunits. Mg(2+) is required as a cofactor.

It localises to the cytoplasm. The catalysed reaction is tRNA(Phe) + L-phenylalanine + ATP = L-phenylalanyl-tRNA(Phe) + AMP + diphosphate + H(+). The polypeptide is Phenylalanine--tRNA ligase beta subunit (Methanococcus maripaludis (strain DSM 14266 / JCM 13030 / NBRC 101832 / S2 / LL)).